Reading from the N-terminus, the 954-residue chain is E3 ubiquitin-protein ligase MIB2 (954 aa).

The MIB/HERC2 1 domain maps to 1–80 (MDLDPYASMQ…AYDLLLYDNA (80 aa)). The segment at 86–138 (HPNIICDCCKKHGIRGMRWKCKMCFDYDLCTQCYMNNKHDLSHAFERYETAHS) adopts a ZZ-type zinc-finger fold. Residues Cys91, Cys94, Cys106, Cys109, Cys115, Cys118, His124, and His128 each contribute to the Zn(2+) site. Residues 149-227 (LTRITLKGTF…KVDLKCTVEA (79 aa)) form the MIB/HERC2 2 domain. 9 ANK repeats span residues 464 to 493 (QGRT…TVNL), 497 to 526 (EGDT…GADL), 530 to 559 (AKCT…DVNL), 563 to 591 (HGDT…NIDF), 597 to 626 (QGFN…QLVD), 631 to 661 (DGFT…DVNV), 665 to 694 (RNQT…DVNA), 698 to 726 (DGDT…EMGS), and 766 to 795 (RGKS…EQQV). RING-type zinc fingers lie at residues 830-865 (CLVC…IKCQ) and 910-943 (CPIC…PICR).

Its subcellular location is the cytoplasm. It carries out the reaction S-ubiquitinyl-[E2 ubiquitin-conjugating enzyme]-L-cysteine + [acceptor protein]-L-lysine = [E2 ubiquitin-conjugating enzyme]-L-cysteine + N(6)-ubiquitinyl-[acceptor protein]-L-lysine.. It functions in the pathway protein modification; protein ubiquitination. E3 ubiquitin-protein ligase that mediates ubiquitination of Delta receptors, which act as ligands of Notch proteins. Positively regulates the Delta-mediated Notch signaling by ubiquitinating the intracellular domain of Delta, leading to endocytosis of Delta receptors. This is E3 ubiquitin-protein ligase MIB2 (MIB2) from Gallus gallus (Chicken).